A 169-amino-acid polypeptide reads, in one-letter code: uncharacterized protein (169 aa).

In terms of domain architecture, Nudix hydrolase spans 35-163 (LIGRGTFILL…PYCPDSLQAL (129 aa)). The Nudix box signature appears at 81–103 (YADSAARELEEELGIRDAVLREH). Mg(2+) contacts are provided by Glu88 and Glu92.

The protein belongs to the Nudix hydrolase family. The cofactor is Mg(2+).

This is an uncharacterized protein from Pseudomonas aeruginosa (strain ATCC 15692 / DSM 22644 / CIP 104116 / JCM 14847 / LMG 12228 / 1C / PRS 101 / PAO1).